Consider the following 1818-residue polypeptide: U3 small nucleolar RNA-associated protein 10 (1818 aa).

Residues 568–588 form a helical membrane-spanning segment; it reads TDFYLLIPLILLALFDNSKLI. Residues 1778–1816 form an HEAT repeat; that stretch reads LVPYIAELLEDDDEEVEMEVRRGLVRVIENVLGEPLDRY.

The protein belongs to the HEATR1/UTP10 family. As to quaternary structure, component of the ribosomal small subunit (SSU) processome.

The protein resides in the nucleus. The protein localises to the nucleolus. It is found in the membrane. Involved in nucleolar processing of pre-18S ribosomal RNA. Involved in ribosome biosynthesis. The chain is U3 small nucleolar RNA-associated protein 10 from Candida albicans (strain SC5314 / ATCC MYA-2876) (Yeast).